The primary structure comprises 385 residues: Cytochrome b (385 aa).

Transmembrane regions (helical) follow at residues 32-52, 76-98, 113-133, and 179-199; these read FGSLLALCLVIQLATGITLAM, WFIRYAHANTASFFFICIYAHMG, PWSIGVIIFLLLIITAFMGYV, and FFALHYLMPFVLAVFALLHLI. Residues histidine 82 and histidine 96 each contribute to the heme b site. Heme b contacts are provided by histidine 183 and histidine 197. Histidine 202 is a binding site for a ubiquinone. Helical transmembrane passes span 225–245, 289–309, 321–341, and 348–368; these read YSFKDLITVFAFLLMFTLFVF, LGGVIAMVAAILILLILPIVD, ISKLLFGFFICNFLLLGVLGQ, and FIVLGQICTIFYFSYFLILLP.

Belongs to the cytochrome b family. Fungal cytochrome b-c1 complex contains 10 subunits; 3 respiratory subunits, 2 core proteins and 5 low-molecular weight proteins. Cytochrome b-c1 complex is a homodimer. Heme b serves as cofactor.

Its subcellular location is the mitochondrion inner membrane. Component of the ubiquinol-cytochrome c reductase complex (complex III or cytochrome b-c1 complex) that is part of the mitochondrial respiratory chain. The b-c1 complex mediates electron transfer from ubiquinol to cytochrome c. Contributes to the generation of a proton gradient across the mitochondrial membrane that is then used for ATP synthesis. The chain is Cytochrome b (COB) from Yarrowia lipolytica (strain CLIB 122 / E 150) (Yeast).